Here is a 358-residue protein sequence, read N- to C-terminus: DNA polymerase IV (358 aa).

The UmuC domain maps to Ile4–Gly185. 2 residues coordinate Mg(2+): Asp8 and Asp103. Residue Glu104 is part of the active site.

The protein belongs to the DNA polymerase type-Y family. Monomer. Mg(2+) serves as cofactor.

Its subcellular location is the cytoplasm. It catalyses the reaction DNA(n) + a 2'-deoxyribonucleoside 5'-triphosphate = DNA(n+1) + diphosphate. Poorly processive, error-prone DNA polymerase involved in untargeted mutagenesis. Copies undamaged DNA at stalled replication forks, which arise in vivo from mismatched or misaligned primer ends. These misaligned primers can be extended by PolIV. Exhibits no 3'-5' exonuclease (proofreading) activity. May be involved in translesional synthesis, in conjunction with the beta clamp from PolIII. The protein is DNA polymerase IV of Shewanella halifaxensis (strain HAW-EB4).